The sequence spans 218 residues: Alkylmercury lyase (218 aa).

It belongs to the MerB family.

It catalyses the reaction an alkylmercury + H(+) = an alkane + Hg(2+). Its function is as follows. Cleaves the carbon-mercury bond of organomercurials such as phenylmercuric acetate. One product is Hg(2+), which is subsequently detoxified by the mercuric reductase. The chain is Alkylmercury lyase (merB1) from Bacillus cereus.